We begin with the raw amino-acid sequence, 67 residues long: Conotoxin AbVIM (67 aa).

An N-terminal signal peptide occupies residues 1 to 17 (VLIIAVLFLTACQLIAT). Residues 18-40 (ASYARSERKHPDLRLSSRNSKLS) constitute a propeptide that is removed on maturation. Disulfide bonds link cysteine 43/cysteine 57, cysteine 50/cysteine 61, and cysteine 56/cysteine 66.

Belongs to the conotoxin O1 superfamily. Expressed by the venom duct.

The protein localises to the secreted. The polypeptide is Conotoxin AbVIM (Conus abbreviatus (Abbreviated cone)).